The primary structure comprises 268 residues: Shikimate dehydrogenase (NADP(+)) (268 aa).

Shikimate contacts are provided by residues 14-16 (SKS) and threonine 61. The Proton acceptor role is filled by lysine 65. Shikimate is bound by residues asparagine 86 and aspartate 102. Residues 126 to 130 (GAGGA), 149 to 154 (NRTFLK), and methionine 213 contribute to the NADP(+) site. Position 215 (tyrosine 215) interacts with shikimate. Position 238 (glycine 238) interacts with NADP(+).

The protein belongs to the shikimate dehydrogenase family. As to quaternary structure, homodimer.

The catalysed reaction is shikimate + NADP(+) = 3-dehydroshikimate + NADPH + H(+). It participates in metabolic intermediate biosynthesis; chorismate biosynthesis; chorismate from D-erythrose 4-phosphate and phosphoenolpyruvate: step 4/7. Its function is as follows. Involved in the biosynthesis of the chorismate, which leads to the biosynthesis of aromatic amino acids. Catalyzes the reversible NADPH linked reduction of 3-dehydroshikimate (DHSA) to yield shikimate (SA). In Haemophilus influenzae (strain PittGG), this protein is Shikimate dehydrogenase (NADP(+)).